The primary structure comprises 233 residues: Biosynthetic peptidoglycan transglycosylase (233 aa).

Residues 8-28 (LIALPVGIFIFFNAYVYGNII) form a helical membrane-spanning segment.

The protein belongs to the glycosyltransferase 51 family.

The protein localises to the cell inner membrane. It carries out the reaction [GlcNAc-(1-&gt;4)-Mur2Ac(oyl-L-Ala-gamma-D-Glu-L-Lys-D-Ala-D-Ala)](n)-di-trans,octa-cis-undecaprenyl diphosphate + beta-D-GlcNAc-(1-&gt;4)-Mur2Ac(oyl-L-Ala-gamma-D-Glu-L-Lys-D-Ala-D-Ala)-di-trans,octa-cis-undecaprenyl diphosphate = [GlcNAc-(1-&gt;4)-Mur2Ac(oyl-L-Ala-gamma-D-Glu-L-Lys-D-Ala-D-Ala)](n+1)-di-trans,octa-cis-undecaprenyl diphosphate + di-trans,octa-cis-undecaprenyl diphosphate + H(+). The protein operates within cell wall biogenesis; peptidoglycan biosynthesis. In terms of biological role, peptidoglycan polymerase that catalyzes glycan chain elongation from lipid-linked precursors. This chain is Biosynthetic peptidoglycan transglycosylase, found in Neisseria meningitidis serogroup A / serotype 4A (strain DSM 15465 / Z2491).